Here is a 502-residue protein sequence, read N- to C-terminus: Chromosomal replication initiator protein DnaA (502 aa).

The domain I, interacts with DnaA modulators stretch occupies residues 1–112 (MADDLSLGFT…PSTDHIDDNS (112 aa)). A domain II region spans residues 113-161 (SSADVLLTDDCGTDTDENYGEPLTGEYQGLPTYFTERPHHTESTVTGGT). The segment at 162–378 (SLNRRYTFET…GALIRVTAFA (217 aa)) is domain III, AAA+ region. ATP is bound by residues Gly206, Gly208, Lys209, and Thr210. The segment at 379–502 (SLNKTAIDKA…TTRIRQRSKR (124 aa)) is domain IV, binds dsDNA.

Belongs to the DnaA family. In terms of assembly, oligomerizes as a right-handed, spiral filament on DNA at oriC.

The protein resides in the cytoplasm. Functionally, plays an essential role in the initiation and regulation of chromosomal replication. ATP-DnaA binds to the origin of replication (oriC) to initiate formation of the DNA replication initiation complex once per cell cycle. Binds the DnaA box (a 9 base pair repeat at the origin) and separates the double-stranded (ds)DNA. Forms a right-handed helical filament on oriC DNA; dsDNA binds to the exterior of the filament while single-stranded (ss)DNA is stabiized in the filament's interior. The ATP-DnaA-oriC complex binds and stabilizes one strand of the AT-rich DNA unwinding element (DUE), permitting loading of DNA polymerase. After initiation quickly degrades to an ADP-DnaA complex that is not apt for DNA replication. Binds acidic phospholipids. The chain is Chromosomal replication initiator protein DnaA from Mycobacterium leprae (strain TN).